The following is a 596-amino-acid chain: uncharacterized protein (596 aa).

A signal peptide spans 1–20; the sequence is MRYKPLLLALMLVFSTPAVA. Composition is skewed to basic and acidic residues over residues 25–90 and 161–184; these read AHNR…KEAT and VRSD…NAKT. The interval 25-184 is disordered; that stretch reads AHNRSAEVKK…KYREEKNAKT (160 aa). 2 coiled-coil regions span residues 177-281 and 318-454; these read REEK…RFVS and NREV…TAED.

Belongs to the peptidase M23B family.

This is an uncharacterized protein from Neisseria meningitidis serogroup B (strain ATCC BAA-335 / MC58).